We begin with the raw amino-acid sequence, 386 residues long: Succinate--CoA ligase [ADP-forming] subunit beta (386 aa).

In terms of domain architecture, ATP-grasp spans 9–244 (KEILRKYGVP…HDEEDPLETR (236 aa)). Residues K46, 53 to 55 (GRG), E99, C102, and E107 contribute to the ATP site. 2 residues coordinate Mg(2+): N199 and D213. Substrate-binding positions include N264 and 321-323 (GIM).

This sequence belongs to the succinate/malate CoA ligase beta subunit family. As to quaternary structure, heterotetramer of two alpha and two beta subunits. Mg(2+) serves as cofactor.

It carries out the reaction succinate + ATP + CoA = succinyl-CoA + ADP + phosphate. The enzyme catalyses GTP + succinate + CoA = succinyl-CoA + GDP + phosphate. It functions in the pathway carbohydrate metabolism; tricarboxylic acid cycle; succinate from succinyl-CoA (ligase route): step 1/1. Succinyl-CoA synthetase functions in the citric acid cycle (TCA), coupling the hydrolysis of succinyl-CoA to the synthesis of either ATP or GTP and thus represents the only step of substrate-level phosphorylation in the TCA. The beta subunit provides nucleotide specificity of the enzyme and binds the substrate succinate, while the binding sites for coenzyme A and phosphate are found in the alpha subunit. The protein is Succinate--CoA ligase [ADP-forming] subunit beta of Rickettsia typhi (strain ATCC VR-144 / Wilmington).